The following is a 322-amino-acid chain: Thioredoxin reductase (322 aa).

FAD contacts are provided by residues 11 to 14 (SGPA), 40 to 41 (IA), Q45, N54, V87, and C145. C142 and C145 form a disulfide bridge. The residue at position 192 (S192) is a Phosphoserine. A Phosphothreonine modification is found at T278. S279 carries the post-translational modification Phosphoserine. FAD-binding positions include D288 and 295–297 (RQA).

It belongs to the class-II pyridine nucleotide-disulfide oxidoreductase family. As to quaternary structure, homodimer. Requires FAD as cofactor.

The protein localises to the cytoplasm. The enzyme catalyses [thioredoxin]-dithiol + NADP(+) = [thioredoxin]-disulfide + NADPH + H(+). This is Thioredoxin reductase (trr1) from Schizosaccharomyces pombe (strain 972 / ATCC 24843) (Fission yeast).